A 526-amino-acid chain; its full sequence is MSTTVRPDEVSAILRKHLAGFESEADVYDVGTVLQVGDGIARIYGLSKVAAGELLEFPDNVMGMALNLEEDNVGAVMFGKSTAVKEGDTVKRTGILASIPVGEAMLGRVINPLGEPIDGKGPIETSIRLPLERKAPGVIFRKSVNQPLQTGLKAIDAMIPIGRGQRELIIGDRQTGKTAVAIDTIINQKGKDVFCIYVAIGQKGSTIAQVVSTLEKYGAMEYTTVIASSASDPAPMQFIAPYAGAAIGEFFRDTGRHALVIYDDLSKQAVAYRQLSLLLRRPPGREAYPGDVFYLHSRLLERAAKITDDLETAKKMNDLPEPLKPMVKAGGSLTALPVIETQAGDVSAYIPTNVISITDGQIFLEPNLFNAGQRPAINVGISVSRVGGSAQIKAMKKITGTLRLDLAQFRELEAFSKFGSDLDKATKAQLDRGARLVEILKQDQYVPMAVEKQVAIIFAGTQGVLDQLDLQYIRRFEEEFLSLLEHKHSDILNSIAETGQMDVDVAKRLKEVAEQFMSTFKQKVTA.

ATP is bound at residue 171–178 (GDRQTGKT).

Belongs to the ATPase alpha/beta chains family. F-type ATPases have 2 components, CF(1) - the catalytic core - and CF(0) - the membrane proton channel. CF(1) has five subunits: alpha(3), beta(3), gamma(1), delta(1), epsilon(1). CF(0) has four main subunits: a, b, b' and c.

Its subcellular location is the cell inner membrane. The catalysed reaction is ATP + H2O + 4 H(+)(in) = ADP + phosphate + 5 H(+)(out). Produces ATP from ADP in the presence of a proton gradient across the membrane. The alpha chain is a regulatory subunit. The protein is ATP synthase subunit alpha of Chlorobium phaeobacteroides (strain BS1).